Here is a 70-residue protein sequence, read N- to C-terminus: Large ribosomal subunit protein eL24 (70 aa).

Zn(2+) is bound by residues Cys6, Cys9, Cys32, and Cys36. Residues 6–36 (CSYCGRPIPPGYGIMYVRVDGVVLRFCSRRC) form a C4-type zinc finger.

Belongs to the eukaryotic ribosomal protein eL24 family. As to quaternary structure, part of the 50S ribosomal subunit. Forms a cluster with proteins L3 and L14. Zn(2+) serves as cofactor.

Functionally, binds to the 23S rRNA. The protein is Large ribosomal subunit protein eL24 of Caldivirga maquilingensis (strain ATCC 700844 / DSM 13496 / JCM 10307 / IC-167).